Consider the following 451-residue polypeptide: Glycine--tRNA ligase (451 aa).

The substrate site is built by Arg-101 and Glu-151. Residues 183–185 (RNE), 193–198 (FRTCEF), 267–268 (EL), and 312–315 (GLTR) each bind ATP. 198-202 (FEQME) is a substrate binding site. 308–312 (ETSAG) is a binding site for substrate.

Belongs to the class-II aminoacyl-tRNA synthetase family. As to quaternary structure, homodimer.

The protein localises to the cytoplasm. It catalyses the reaction tRNA(Gly) + glycine + ATP = glycyl-tRNA(Gly) + AMP + diphosphate. Catalyzes the attachment of glycine to tRNA(Gly). The sequence is that of Glycine--tRNA ligase from Treponema denticola (strain ATCC 35405 / DSM 14222 / CIP 103919 / JCM 8153 / KCTC 15104).